Here is a 257-residue protein sequence, read N- to C-terminus: Steroid 5-alpha-reductase DET2 (257 aa).

A run of 6 helical transmembrane segments spans residues 11 to 31, 47 to 67, 78 to 97, 110 to 130, 151 to 171, and 200 to 220; these read FIVF…QFFT, ISPP…TIIV, LAFL…TIIY, FPLN…YIQS, IGLV…GVLL, and IMEW…AFFV.

The protein belongs to the steroid 5-alpha reductase family. Mostly expressed in leaves and hypocotyls and, to a lower extent, in stems, cotyledons, roots, seeds and callus.

The protein resides in the membrane. It catalyses the reaction a 3-oxo-5alpha-steroid + NADP(+) = a 3-oxo-Delta(4)-steroid + NADPH + H(+). It participates in plant hormone biosynthesis; brassinosteroid biosynthesis. Its activity is regulated as follows. Repressed by steroid (4-MA, VG106, PD91, PD17, Finasteride) and non-steroid (AS601811, AFA27, AFA76, AFA131, AFA192) inhibitors; steroid inhibitors are generally more efficient. In terms of biological role, involved in a reduction step in the biosynthesis of the plant steroid, brassinolide (BL). Can use progesterone, testosterone, androstenedione and campestenone as substrate. This Solanum lycopersicum (Tomato) protein is Steroid 5-alpha-reductase DET2.